A 159-amino-acid polypeptide reads, in one-letter code: NADH-quinone oxidoreductase subunit I (159 aa).

4Fe-4S ferredoxin-type domains lie at 51–80 (RRYE…IESD) and 90–119 (TRYD…EGPN). Residues Cys-60, Cys-63, Cys-66, Cys-70, Cys-99, Cys-102, Cys-105, and Cys-109 each contribute to the [4Fe-4S] cluster site.

The protein belongs to the complex I 23 kDa subunit family. In terms of assembly, NDH-1 is composed of 14 different subunits. Subunits NuoA, H, J, K, L, M, N constitute the membrane sector of the complex. [4Fe-4S] cluster is required as a cofactor.

Its subcellular location is the cell inner membrane. The catalysed reaction is a quinone + NADH + 5 H(+)(in) = a quinol + NAD(+) + 4 H(+)(out). Its function is as follows. NDH-1 shuttles electrons from NADH, via FMN and iron-sulfur (Fe-S) centers, to quinones in the respiratory chain. The immediate electron acceptor for the enzyme in this species is believed to be ubiquinone. Couples the redox reaction to proton translocation (for every two electrons transferred, four hydrogen ions are translocated across the cytoplasmic membrane), and thus conserves the redox energy in a proton gradient. The protein is NADH-quinone oxidoreductase subunit I of Rickettsia typhi (strain ATCC VR-144 / Wilmington).